The following is a 78-amino-acid chain: MEDEIELKTAPADFRFPTTNQTRHCFTRYIEFHRCTTAKGEDANECERFAKYYRALCPGEWVDKWNEQRETGTFPGPL.

Positions 22–65 (TRHCFTRYIEFHRCTTAKGEDANECERFAKYYRALCPGEWVDKW) constitute a CHCH domain. The short motif at 25 to 35 (CFTRYIEFHRC) is the Cx9C motif element. 2 disulfide bridges follow: C25–C57 and C35–C46. A Cx10C motif motif is present at residues 46–57 (CERFAKYYRALC).

The protein belongs to the cytochrome c oxidase subunit 6B (TC 3.D.4.8) family. In terms of tissue distribution, expressed in the whole plant.

It is found in the mitochondrion. Functionally, this protein is one of the nuclear-coded polypeptide chains of cytochrome c oxidase, the terminal oxidase in mitochondrial electron transport. This protein may be one of the heme-binding subunits of the oxidase. In Arabidopsis thaliana (Mouse-ear cress), this protein is Cytochrome c oxidase subunit 6b-3 (COX6B-3).